The primary structure comprises 371 residues: tRNA 2-selenouridine synthase (371 aa).

Residues 14–137 (FLDDVPLIDL…MRRFLIDTLD (124 aa)) form the Rhodanese domain. Cys97 acts as the S-selanylcysteine intermediate in catalysis.

Belongs to the SelU family. In terms of assembly, monomer.

The enzyme catalyses 5-methylaminomethyl-2-thiouridine(34) in tRNA + selenophosphate + (2E)-geranyl diphosphate + H2O + H(+) = 5-methylaminomethyl-2-selenouridine(34) in tRNA + (2E)-thiogeraniol + phosphate + diphosphate. It carries out the reaction 5-methylaminomethyl-2-thiouridine(34) in tRNA + (2E)-geranyl diphosphate = 5-methylaminomethyl-S-(2E)-geranyl-thiouridine(34) in tRNA + diphosphate. It catalyses the reaction 5-methylaminomethyl-S-(2E)-geranyl-thiouridine(34) in tRNA + selenophosphate + H(+) = 5-methylaminomethyl-2-(Se-phospho)selenouridine(34) in tRNA + (2E)-thiogeraniol. The catalysed reaction is 5-methylaminomethyl-2-(Se-phospho)selenouridine(34) in tRNA + H2O = 5-methylaminomethyl-2-selenouridine(34) in tRNA + phosphate. In terms of biological role, involved in the post-transcriptional modification of the uridine at the wobble position (U34) of tRNA(Lys), tRNA(Glu) and tRNA(Gln). Catalyzes the conversion of 2-thiouridine (S2U-RNA) to 2-selenouridine (Se2U-RNA). Acts in a two-step process involving geranylation of 2-thiouridine (S2U) to S-geranyl-2-thiouridine (geS2U) and subsequent selenation of the latter derivative to 2-selenouridine (Se2U) in the tRNA chain. In Aeromonas salmonicida (strain A449), this protein is tRNA 2-selenouridine synthase.